The primary structure comprises 215 residues: Penicillin-binding protein activator LpoB (215 aa).

A signal peptide spans 1 to 19 (MMKMCRYALITALAIFLAG). Cysteine 20 carries the N-palmitoyl cysteine lipid modification. A lipid anchor (S-diacylglycerol cysteine) is attached at cysteine 20. The interval 28 to 78 (APVEEAKPQPQQPAQPQPTVPTVPAVPSVPAQPGPIEHQDQQSGQPAPRVR) is disordered. Residues 37 to 48 (PQQPAQPQPTVP) are compositionally biased toward pro residues. The span at 49–58 (TVPAVPSVPA) shows a compositional bias: low complexity.

The protein belongs to the LpoB family. As to quaternary structure, interacts with PBP1b.

The protein localises to the cell outer membrane. Its function is as follows. Regulator of peptidoglycan synthesis that is essential for the function of penicillin-binding protein 1B (PBP1b). This chain is Penicillin-binding protein activator LpoB, found in Klebsiella pneumoniae subsp. pneumoniae (strain ATCC 700721 / MGH 78578).